We begin with the raw amino-acid sequence, 336 residues long: NADH-quinone oxidoreductase subunit H (336 aa).

Transmembrane regions (helical) follow at residues 12–32 (FLKI…LTWF), 84–104 (VVMA…GPGF), 118–138 (VNIA…GTIF), 156–176 (AAVV…VILL), 193–213 (GVWF…CMLA), 247–267 (LAEW…LFFG), 274–294 (IFGP…LVFF), and 313–333 (IAWK…AVVV).

Belongs to the complex I subunit 1 family. NDH-1 is composed of 14 different subunits. Subunits NuoA, H, J, K, L, M, N constitute the membrane sector of the complex.

Its subcellular location is the cell inner membrane. The catalysed reaction is a quinone + NADH + 5 H(+)(in) = a quinol + NAD(+) + 4 H(+)(out). NDH-1 shuttles electrons from NADH, via FMN and iron-sulfur (Fe-S) centers, to quinones in the respiratory chain. The immediate electron acceptor for the enzyme in this species is believed to be ubiquinone. Couples the redox reaction to proton translocation (for every two electrons transferred, four hydrogen ions are translocated across the cytoplasmic membrane), and thus conserves the redox energy in a proton gradient. This subunit may bind ubiquinone. The sequence is that of NADH-quinone oxidoreductase subunit H from Aquifex aeolicus (strain VF5).